Reading from the N-terminus, the 468-residue chain is ATP synthase subunit beta 2 (468 aa).

155-162 contributes to the ATP binding site; sequence GGAGVGKT.

The protein belongs to the ATPase alpha/beta chains family. As to quaternary structure, F-type ATPases have 2 components, CF(1) - the catalytic core - and CF(0) - the membrane proton channel. CF(1) has five subunits: alpha(3), beta(3), gamma(1), delta(1), epsilon(1). CF(0) has four main subunits: a(1), b(1), b'(1) and c(9-12).

The protein localises to the cell inner membrane. It catalyses the reaction ATP + H2O + 4 H(+)(in) = ADP + phosphate + 5 H(+)(out). Functionally, produces ATP from ADP in the presence of a proton gradient across the membrane. The catalytic sites are hosted primarily by the beta subunits. This Chlorobium luteolum (strain DSM 273 / BCRC 81028 / 2530) (Pelodictyon luteolum) protein is ATP synthase subunit beta 2.